We begin with the raw amino-acid sequence, 132 residues long: Small ribosomal subunit protein uS11 (132 aa).

The protein belongs to the universal ribosomal protein uS11 family. As to quaternary structure, part of the 30S ribosomal subunit. Interacts with proteins S7 and S18. Binds to IF-3.

Functionally, located on the platform of the 30S subunit, it bridges several disparate RNA helices of the 16S rRNA. Forms part of the Shine-Dalgarno cleft in the 70S ribosome. This Bifidobacterium animalis subsp. lactis (strain AD011) protein is Small ribosomal subunit protein uS11.